Consider the following 549-residue polypeptide: Beta-mannosyltransferase 3 (549 aa).

Topologically, residues 1-37 (MFESDLSFYSALLILCCPISIVFFKKFPIKGYTGANK) are cytoplasmic. A helical membrane pass occupies residues 38 to 58 (VSLFLQCLIAILNLNILYSFI). Residues 59–549 (NSLTITLGHD…DTMGWDKLSR (491 aa)) lie on the Extracellular side of the membrane.

Belongs to the BMT family.

It localises to the membrane. Its function is as follows. Beta-mannosyltransferase involved in cell wall biosynthesis. Required for addition of the second beta-mannose residue to acid-stable fraction of cell wall phosphopeptidomannan, and in elongation of beta-mannose chains on the phosphopeptidomannan acid-labile fraction. In Candida albicans (strain SC5314 / ATCC MYA-2876) (Yeast), this protein is Beta-mannosyltransferase 3 (BMT3).